The following is a 57-amino-acid chain: Large ribosomal subunit protein bL33 (57 aa).

Belongs to the bacterial ribosomal protein bL33 family.

The sequence is that of Large ribosomal subunit protein bL33 from Shewanella sp. (strain W3-18-1).